Reading from the N-terminus, the 160-residue chain is Major strawberry allergen Fra a 1-A (160 aa).

Belongs to the BetVI family. In terms of assembly, monomer.

In terms of biological role, may be involved in ripening of fruits. The protein is Major strawberry allergen Fra a 1-A of Fragaria ananassa (Strawberry).